A 351-amino-acid chain; its full sequence is Peptide chain release factor 1 (351 aa).

Position 229 is an N5-methylglutamine (glutamine 229).

Belongs to the prokaryotic/mitochondrial release factor family. Methylated by PrmC. Methylation increases the termination efficiency of RF1.

It localises to the cytoplasm. Its function is as follows. Peptide chain release factor 1 directs the termination of translation in response to the peptide chain termination codons UAG and UAA. The sequence is that of Peptide chain release factor 1 from Cereibacter sphaeroides (strain ATCC 17023 / DSM 158 / JCM 6121 / CCUG 31486 / LMG 2827 / NBRC 12203 / NCIMB 8253 / ATH 2.4.1.) (Rhodobacter sphaeroides).